Here is a 96-residue protein sequence, read N- to C-terminus: Small ribosomal subunit protein bS16m (96 aa).

Belongs to the bacterial ribosomal protein bS16 family. As to quaternary structure, component of the mitochondrial small ribosomal subunit (mt-SSU). Mature yeast 74S mitochondrial ribosomes consist of a small (37S) and a large (54S) subunit. The 37S small subunit contains a 15S ribosomal RNA (15S mt-rRNA) and at least 32 different proteins. The 54S large subunit contains a 21S rRNA (21S mt-rRNA) and at least 45 different proteins.

It is found in the mitochondrion. Component of the mitochondrial ribosome (mitoribosome), a dedicated translation machinery responsible for the synthesis of mitochondrial genome-encoded proteins, including at least some of the essential transmembrane subunits of the mitochondrial respiratory chain. The mitoribosomes are attached to the mitochondrial inner membrane and translation products are cotranslationally integrated into the membrane. This Schizosaccharomyces pombe (strain 972 / ATCC 24843) (Fission yeast) protein is Small ribosomal subunit protein bS16m (mrps16).